Consider the following 478-residue polypeptide: Lysine-rich nucleolar protein 1 (478 aa).

The interval 1–231 (MVSKTQKADL…THQEGDILLV (231 aa)) is disordered. Lys7 is covalently cross-linked (Glycyl lysine isopeptide (Lys-Gly) (interchain with G-Cter in SUMO2)). A compositionally biased stretch (basic residues) spans 17–27 (KKKKKKKKKRV). A compositionally biased stretch (polar residues) spans 33-45 (EPETQYSVLNSND). Residues Ser51 and Ser59 each carry the phosphoserine modification. The segment covering 54 to 63 (RATSPSNNVD) has biased composition (polar residues). 2 stretches are compositionally biased toward basic residues: residues 73–82 (SKRKKKKKSC) and 120–129 (EKKKKRRKSL). Lys140 is covalently cross-linked (Glycyl lysine isopeptide (Lys-Gly) (interchain with G-Cter in SUMO2)). Position 142 is a phosphoserine (Ser142). Residues 143–153 (PDPKHAKEVSK) show a composition bias toward basic and acidic residues. 2 stretches are compositionally biased toward basic residues: residues 154–165 (AGRKSKKQRKEK) and 204–222 (QKRKQGSPRDHNMKKKKKT). Lys250 is covalently cross-linked (Glycyl lysine isopeptide (Lys-Gly) (interchain with G-Cter in SUMO1); alternate). Lys250 participates in a covalent cross-link: Glycyl lysine isopeptide (Lys-Gly) (interchain with G-Cter in SUMO2); alternate. Positions 258–314 (PIDSPKAPGKKKVKSKKKVEQPVGEGLAVKRKKKKKKRKENGVKEDPWQEEKEESDT) are disordered. Position 261 is a phosphoserine (Ser261). The span at 265–274 (PGKKKVKSKK) shows a compositional bias: basic residues. Residues Lys275 and Lys287 each participate in a glycyl lysine isopeptide (Lys-Gly) (interchain with G-Cter in SUMO2) cross-link. Positions 286–296 (VKRKKKKKKRK) are enriched in basic residues. Positions 297-307 (ENGVKEDPWQE) are enriched in basic and acidic residues. Lys309 participates in a covalent cross-link: Glycyl lysine isopeptide (Lys-Gly) (interchain with G-Cter in SUMO2). Residues 310–478 (EESDTDLEVV…NASKSIKLQD (169 aa)) are interaction with ZNF106. At Ser312 the chain carries Phosphoserine. Thr314 bears the Phosphothreonine mark. A Glycyl lysine isopeptide (Lys-Gly) (interchain with G-Cter in SUMO2) cross-link involves residue Lys323. Residues 340–357 (QEEIDRESGKTEASEPKK) are compositionally biased toward basic and acidic residues. A disordered region spans residues 340–378 (QEEIDRESGKTEASEPKKWTVGLSVKTEASEPKKWTGTQ). Residues Lys373, Lys393, Lys395, Lys427, and Lys462 each participate in a glycyl lysine isopeptide (Lys-Gly) (interchain with G-Cter in SUMO2) cross-link.

As to quaternary structure, interacts with ZNF106. Expressed in testis.

It localises to the nucleus. Its subcellular location is the nucleolus. This Mus musculus (Mouse) protein is Lysine-rich nucleolar protein 1 (Knop1).